Here is a 105-residue protein sequence, read N- to C-terminus: Iron-sulfur cluster assembly protein CyaY (105 aa).

Belongs to the frataxin family.

Functionally, involved in iron-sulfur (Fe-S) cluster assembly. May act as a regulator of Fe-S biogenesis. This is Iron-sulfur cluster assembly protein CyaY from Paraburkholderia phytofirmans (strain DSM 17436 / LMG 22146 / PsJN) (Burkholderia phytofirmans).